A 237-amino-acid chain; its full sequence is Oil body-associated protein 2C (237 aa).

This sequence belongs to the OBAP family.

The sequence is that of Oil body-associated protein 2C from Arabidopsis thaliana (Mouse-ear cress).